The following is a 671-amino-acid chain: MEPIEQQLTELRTTLRHHEYLYHVMDAPEILDAEYDRLMRELRELEAQRPDLITPDSPTQRVGAAPLTAFNQIRHEVPMLSLDNVFDEESFLAFNKRVQDRLKSTENVIWCCELKLDGLAVSILYENGVLVSAATRGDGTTGEDITSNVRTIRAIPLKLHGDNIPARLEVRGEVFLPQTGFEKINEDARRTGGKVFANPRNAAAGSLRQLDPRITAKRPLTFFCYGVGILEGGELPDTHLGRLLQFKAWGLPVSDRVTLCDSPQAVLDFYHNVEKDRPTLGFDIDGVVIKVNSLALQEQLGFVARAPRWAVAFKFPAQEQMTFVRDVEFQVGRTGAITPVARLEPVQVAGVLVSNATLHNADEIERLGLRIGDKVVIRRAGDVIPQVVNVVLSERPEETRPIVFPTHCPVCGSDVERVEGEAVTRCTGGLICGAQRKESLKHFVSRRAMDVDGMGDKIIDQLVEREYVHTPADLFRLTAGKLTGLDRMGPKSAQNVVNALEKAKATTFARFLYALGIREVGEATAAGLAAYFGTLEALQAATIDELQKVPDVGIVVATHVFNFFAEESNRDVIGQLLAEGVHWPAPVVINAQEIDSPFAGKTVVLTGSLSQMSRDDAKARLVALGAKVAGSVSKKTDLVIAGEAAGSKLAKAQELGITVIDEAEMIRLLGA.

NAD(+) contacts are provided by residues 32 to 36, 81 to 82, and E113; these read DAEYD and SL. The N6-AMP-lysine intermediate role is filled by K115. The NAD(+) site is built by R136, E173, K290, and K314. Zn(2+) contacts are provided by C408, C411, C426, and C432. The BRCT domain maps to 593–671; that stretch reads EIDSPFAGKT…EAEMIRLLGA (79 aa).

This sequence belongs to the NAD-dependent DNA ligase family. LigA subfamily. Mg(2+) is required as a cofactor. Mn(2+) serves as cofactor.

It carries out the reaction NAD(+) + (deoxyribonucleotide)n-3'-hydroxyl + 5'-phospho-(deoxyribonucleotide)m = (deoxyribonucleotide)n+m + AMP + beta-nicotinamide D-nucleotide.. In terms of biological role, DNA ligase that catalyzes the formation of phosphodiester linkages between 5'-phosphoryl and 3'-hydroxyl groups in double-stranded DNA using NAD as a coenzyme and as the energy source for the reaction. It is essential for DNA replication and repair of damaged DNA. In Salmonella typhi, this protein is DNA ligase.